The chain runs to 259 residues: MQRLRARDLRAVDLYRTVKSNLDTKFSLPGMPPGREHRQVPPPWLQAMQKIPPSEILTRPIPIQHQKPNPKARKPKNIFRPQKIVYEEDELRKTFYRDHPWELARPRVILEIDGMDSHYCDWSQGLEQPSIPLSGESVVQRQLWLMHNEGMTKEKAYDLVRREFYALRQEEEVERRIAQEEARMVGAYFGKNRLQIGNELEDHEYERWKDWAATEMAKAEAERENAMPTFGGKAKDAEASIDDLMLEGSMDAILEEKKA.

Belongs to the mitochondrion-specific ribosomal protein mS23 family. Component of the mitochondrial small ribosomal subunit.

The protein resides in the mitochondrion. In Pyricularia oryzae (strain 70-15 / ATCC MYA-4617 / FGSC 8958) (Rice blast fungus), this protein is Small ribosomal subunit protein mS23 (RSM25).